The chain runs to 2555 residues: Neurogenic locus notch homolog protein 1 (2555 aa).

Residues 1–18 form the signal peptide; sequence MPPLLAPLLCLALLPALA. Residues 19 to 1735 lie on the Extracellular side of the membrane; the sequence is ARGPRCSQPG…VEPPPPAQLH (1717 aa). EGF-like domains are found at residues 20–58, 59–99, 102–139, and 140–176; these read RGPRCSQPGETCLNGGKCEAANGTEACVCGGAFVGPRCQ, DPNP…PLCL, LDNACLTNPCRNGGTCDLLTLTEYKCRCPPGWSGKSCQ, and QADPCASNPCANGGQCLPFEASYICHCPPSFHGPTCR. Disulfide bonds link Cys-24-Cys-37, Cys-31-Cys-46, Cys-48-Cys-57, Cys-63-Cys-74, Cys-68-Cys-87, Cys-89-Cys-98, Cys-106-Cys-117, Cys-111-Cys-127, Cys-129-Cys-138, Cys-144-Cys-155, Cys-149-Cys-164, Cys-166-Cys-175, Cys-182-Cys-195, Cys-189-Cys-204, Cys-206-Cys-215, Cys-222-Cys-233, Cys-227-Cys-243, Cys-245-Cys-254, Cys-261-Cys-272, Cys-266-Cys-281, Cys-283-Cys-292, Cys-299-Cys-312, Cys-306-Cys-321, Cys-323-Cys-332, Cys-339-Cys-350, Cys-344-Cys-359, Cys-361-Cys-370, Cys-376-Cys-387, Cys-381-Cys-398, Cys-400-Cys-409, Cys-416-Cys-429, Cys-423-Cys-438, and Cys-440-Cys-449. A glycan (N-linked (GlcNAc...) asparagine) is linked at Asn-41. Ser-65 carries O-linked (Glc...) serine glycosylation. Thr-73 carries an O-linked (Fuc...) threonine glycan. O-linked (Fuc...) threonine glycosylation occurs at Thr-116. O-linked (Glc...) serine glycosylation is present at Ser-146. One can recognise an EGF-like 5; calcium-binding domain in the interval 178–216; it reads DVNECGQKPGLCRHGGTCHNEVGSYRCVCRATHTGPNCE. O-linked (Fuc...) threonine glycosylation is present at Thr-194. The EGF-like 6 domain occupies 218–255; it reads PYVPCSPSPCQNGGTCRPTGDVTHECACLPGFTGQNCE. Thr-232 carries an O-linked (Fuc...) threonine; alternate glycan. Thr-232 carries O-linked (GalNAc...) threonine; alternate glycosylation. The EGF-like 7; calcium-binding domain maps to 257–293; the sequence is NIDDCPGNNCKNGGACVDGVNTYNCRCPPEWTGQYCT. The EGF-like 8; calcium-binding domain maps to 295–333; the sequence is DVDECQLMPNACQNGGTCHNTHGGYNCVCVNGWTGEDCS. O-linked (Fuc...) threonine glycosylation is present at Thr-311. An EGF-like 9; calcium-binding domain is found at 335–371; sequence NIDDCASAACFHGATCHDRVASFYCECPHGRTGLLCH. O-linked (Glc...) serine glycosylation is present at Ser-341. An O-linked (Fuc...) threonine glycan is attached at Thr-349. One can recognise an EGF-like 10 domain in the interval 372–410; that stretch reads LNDACISNPCNEGSNCDTNPVNGKAICTCPSGYTGPACS. A glycan (O-linked (Glc...) serine) is linked at Ser-378. Residues 412–450 enclose the EGF-like 11; calcium-binding domain; it reads DVDECSLGANPCEHAGKCINTLGSFECQCLQGYTGPRCE. The interval 420–421 is interaction with DLL4; the sequence is AN. Residues Thr-432 and Ser-435 each coordinate Ca(2+). A glycan (O-linked (Glc...) serine) is linked at Ser-435. An interaction with DLL4 region spans residues 448–452; sequence RCEID. 3 residues coordinate Ca(2+): Asp-452, Val-453, and Glu-455. Positions 452 to 488 constitute an EGF-like 12; calcium-binding domain; sequence DVNECVSNPCQNDATCLDQIGEFQCICMPGYEGVHCE. Cystine bridges form between Cys-456/Cys-467, Cys-461/Cys-476, and Cys-478/Cys-487. Ser-458 is a glycosylation site (O-linked (Glc...) serine). A glycan (O-linked (Fuc...) threonine) is linked at Thr-466. Ca(2+) contacts are provided by Asp-469 and Gln-470. 3 residues coordinate Ca(2+): Asn-490, Thr-491, and Glu-493. An EGF-like 13; calcium-binding domain is found at 490 to 526; that stretch reads NTDECASSPCLHNGRCLDKINEFQCECPTGFTGHLCQ. Intrachain disulfides connect Cys-494–Cys-505, Cys-499–Cys-514, Cys-516–Cys-525, Cys-532–Cys-543, Cys-537–Cys-552, Cys-554–Cys-563, Cys-570–Cys-580, Cys-575–Cys-589, Cys-591–Cys-600, Cys-607–Cys-618, Cys-612–Cys-627, Cys-629–Cys-638, Cys-645–Cys-655, Cys-650–Cys-664, Cys-666–Cys-675, Cys-682–Cys-693, Cys-687–Cys-702, Cys-704–Cys-713, Cys-720–Cys-730, Cys-725–Cys-739, Cys-741–Cys-750, Cys-757–Cys-768, Cys-762–Cys-777, Cys-779–Cys-788, Cys-795–Cys-806, Cys-800–Cys-815, Cys-817–Cys-826, Cys-833–Cys-844, Cys-838–Cys-855, Cys-857–Cys-866, Cys-873–Cys-884, Cys-878–Cys-893, Cys-895–Cys-904, Cys-911–Cys-922, Cys-916–Cys-931, Cys-933–Cys-942, Cys-949–Cys-960, Cys-954–Cys-969, Cys-971–Cys-980, Cys-987–Cys-998, Cys-992–Cys-1007, Cys-1009–Cys-1018, Cys-1025–Cys-1036, Cys-1030–Cys-1045, Cys-1047–Cys-1056, Cys-1063–Cys-1074, Cys-1068–Cys-1083, Cys-1085–Cys-1094, Cys-1101–Cys-1122, Cys-1116–Cys-1131, Cys-1133–Cys-1142, Cys-1149–Cys-1160, Cys-1154–Cys-1169, Cys-1171–Cys-1180, Cys-1187–Cys-1198, Cys-1192–Cys-1207, Cys-1209–Cys-1218, Cys-1238–Cys-1253, Cys-1255–Cys-1264, Cys-1271–Cys-1284, Cys-1276–Cys-1293, Cys-1295–Cys-1304, Cys-1311–Cys-1322, Cys-1316–Cys-1334, Cys-1336–Cys-1345, Cys-1352–Cys-1363, Cys-1357–Cys-1372, Cys-1374–Cys-1383, Cys-1391–Cys-1403, Cys-1397–Cys-1414, Cys-1416–Cys-1425, Cys-1449–Cys-1472, Cys-1454–Cys-1467, and Cys-1463–Cys-1479. A glycan (O-linked (Glc...) serine) is linked at Ser-496. Asp-507 and Lys-508 together coordinate Ca(2+). One can recognise an EGF-like 14; calcium-binding domain in the interval 528–564; that stretch reads DVDECASTPCKNGAKCLDGPNTYTCVCTEGYTGTHCE. Ser-534 carries an O-linked (Glc...) serine glycan. An EGF-like 15; calcium-binding domain is found at 566-601; that stretch reads DIDECDPDPCHYGSCKDGVATFTCLCRPGYTGHHCE. Positions 603 to 639 constitute an EGF-like 16; calcium-binding domain; the sequence is NINECSSQPCRHGGTCQDRDNAYLCFCLKGTTGPNCE. A glycan (O-linked (Glc...) serine) is linked at Ser-609. O-linked (Fuc...) threonine glycosylation occurs at Thr-617. The EGF-like 17; calcium-binding domain occupies 641–676; that stretch reads NLDDCASSPCDSGTCLDKIDGYECACEPGYTGSMCN. Ser-647 carries an O-linked (Glc...) serine glycan. The EGF-like 18; calcium-binding domain occupies 678–714; sequence NIDECAGNPCHNGGTCEDGINGFTCRCPEGYHDPTCL. O-linked (Fuc...) threonine glycosylation is present at Thr-692. An EGF-like 19; calcium-binding domain is found at 716-751; sequence EVNECNSNPCVHGACRDSLNGYKCDCDPGWSGTNCD. The O-linked (Glc...) serine glycan is linked to Ser-722. The region spanning 753–789 is the EGF-like 20 domain; that stretch reads NNNECESNPCVNGGTCKDMTSGYVCTCREGFSGPNCQ. Ser-759 is a glycosylation site (O-linked (Glc...) serine). Thr-767 carries an O-linked (Fuc...) threonine glycan. Ser-784 carries an O-linked (GlcNAc) serine glycan. Positions 791–827 constitute an EGF-like 21; calcium-binding domain; it reads NINECASNPCLNQGTCIDDVAGYKCNCLLPYTGATCE. A glycan (O-linked (Glc...) serine) is linked at Ser-797. The O-linked (Fuc...) threonine glycan is linked to Thr-805. The EGF-like 22 domain occupies 829–867; it reads VLAPCAPSPCRNGGECRQSEDYESFSCVCPTGWQGQTCE. The EGF-like 23; calcium-binding domain maps to 869–905; sequence DINECVLSPCRHGASCQNTHGGYRCHCQAGYSGRNCE. The 37-residue stretch at 907–943 folds into the EGF-like 24 domain; the sequence is DIDDCRPNPCHNGGSCTDGINTAFCDCLPGFRGTFCE. Ser-921 carries O-linked (Fuc) serine glycosylation. One can recognise an EGF-like 25; calcium-binding domain in the interval 945–981; it reads DINECASDPCRNGANCTDCVDSYTCTCPAGFSGIHCE. An O-linked (Glc...) serine glycan is attached at Ser-951. Residue Asn-959 is glycosylated (N-linked (GlcNAc...) asparagine). 5 consecutive EGF-like domains span residues 983–1019, 1021–1057, 1059–1095, 1097–1143, and 1145–1181; these read NTPDCTESSCFNGGTCVDGINSFTCLCPPGFTGSYCQ, DVNECDSQPCLHGGTCQDGCGSYRCTCPQGYTGPNCQ, LVHWCDSSPCKNGGKCWQTHTQYRCECPSGWTGLYCD, PSVS…SYCE, and LVDECSPSPCQNGATCTDYLGGYSCKCVAGYHGVNCS. Residue Thr-997 is glycosylated (O-linked (Fuc...) threonine). The O-linked (Glc...) serine glycan is linked to Ser-1027. The O-linked (Fuc...) threonine glycan is linked to Thr-1035. The O-linked (Glc...) serine glycan is linked to Ser-1065. Thr-1159 carries O-linked (Fuc...) threonine glycosylation. N-linked (GlcNAc...) asparagine glycosylation is present at Asn-1179. In terms of domain architecture, EGF-like 31; calcium-binding spans 1183–1219; sequence EIDECLSHPCQNGGTCLDLPNTYKCSCPRGTQGVHCE. The O-linked (Glc...) serine glycan is linked to Ser-1189. Thr-1197 is a glycosylation site (O-linked (Fuc...) threonine). Residues 1221-1265 form the EGF-like 32; calcium-binding domain; the sequence is NVDDCNPPVDPVSRSPKCFNNGTCVDQVGGYSCTCPPGFVGERCE. Asn-1241 carries an N-linked (GlcNAc...) asparagine glycan. 4 EGF-like domains span residues 1267 to 1305, 1307 to 1346, 1348 to 1384, and 1387 to 1426; these read DVNECLSNPCDARGTQNCVQRVNDFHCECRAGHTGRRCE, VINGCKGKPCKNGGTCAVASNTARGFICKCPAGFEGATCE, DARTCGSLRCLNGGTCISGPRSPTCLCLGPFTGPECQ, and ASSPCLGGNPCYNQGTCEPTSESPFYRCLCPAKFNGLLCH. O-linked (Glc...) serine glycosylation occurs at Ser-1273. Residue Thr-1362 is glycosylated (O-linked (Fuc...) threonine). O-linked (GlcNAc...) threonine glycosylation occurs at Thr-1379. The O-linked (Fuc...) threonine; alternate glycan is linked to Thr-1402. Thr-1402 carries O-linked (GalNAc...) threonine; alternate glycosylation. LNR repeat units lie at residues 1449-1489, 1490-1531, and 1532-1571; these read CELP…PWKN, CTQS…CNPL, and YDQYCKDHFSDGHCDQGCNSAECEWDGLDCAEHVPERLAA. 4 residues coordinate Ca(2+): Asp-1457, Asn-1460, Asp-1475, and Asp-1478. N-linked (GlcNAc...) asparagine glycosylation is present at Asn-1489. Intrachain disulfides connect Cys-1490–Cys-1514, Cys-1496–Cys-1509, Cys-1505–Cys-1521, Cys-1536–Cys-1549, and Cys-1545–Cys-1561. Residue Asn-1587 is glycosylated (N-linked (GlcNAc...) asparagine). Thr-1725 is a glycosylation site (O-linked (GalNAc...) threonine). Residues 1728–1760 are interaction with PSEN1; the sequence is PPPPAQLHFMYVAAAAFVLLFFVGCGVLLSRKR. A helical membrane pass occupies residues 1736 to 1756; it reads FMYVAAAAFVLLFFVGCGVLL. Topologically, residues 1757-2555 are cytoplasmic; it reads SRKRRRQHGQ…QIARIPEAFK (799 aa). Lys-1759 participates in a covalent cross-link: Glycyl lysine isopeptide (Lys-Gly) (interchain with G-Cter in ubiquitin). The segment at 1780–1808 is disordered; it reads KKKRREPLGEDSVGLKPLKNASDGALMDD. Thr-1861 is modified (phosphothreonine). ANK repeat units lie at residues 1927 to 1956, 1960 to 1990, 1994 to 2023, 2027 to 2056, 2060 to 2089, and 2095 to 2122; these read TGETALHLAARYSRSDAAKRLLEASADANI, MGRTPLHAAVSADAQGVFQILIRNRATDLDA, DGTTPLILAARLAVEGMLEDLINSHADVNA, LGKSALHWAAAVNNVDAAVVLLKNGANKDM, REETPLFLAAREGSYETAKVLLDHFANRDI, and RLPRDIAQERMHHDIVRLLDEYNLVRSP. An HIF1AN-binding region spans residues 1947–1955; that stretch reads LLEASADAN. Asn-1955 carries the post-translational modification (3S)-3-hydroxyasparagine; by HIF1AN; partial. An HIF1AN-binding region spans residues 2014–2022; that stretch reads LINSHADVN. A (3S)-3-hydroxyasparagine; by HIF1AN modification is found at Asn-2022. Disordered regions lie at residues 2151–2194, 2379–2447, and 2483–2555; these read PGVQ…LDSS, LVQT…QPLG, and TPPS…EAFK. Over residues 2379-2408 the composition is skewed to low complexity; sequence LVQTQQVQPQNLQMQQQNLQPANIQQQQSL. Positions 2483–2502 are enriched in polar residues; the sequence is TPPSQHSYSSPVDNTPSHQL. Residues 2512 to 2527 are compositionally biased toward low complexity; sequence PSPESPDQWSSSSPHS. Residues 2528–2547 are compositionally biased toward polar residues; sequence NVSDWSEGVSSPPTSMQSQI.

The protein belongs to the NOTCH family. Heterodimer of a C-terminal fragment N(TM) and an N-terminal fragment N(EC) which are probably linked by disulfide bonds. Interacts with DNER, DTX1, DTX2 and RBPJ/RBPSUH. Also interacts with MAML1, MAML2 and MAML3 which act as transcriptional coactivators for NOTCH1. The NOTCH1 intracellular domain interacts with SNW1; the interaction involves multimerized NOTCH1 NICD and is implicated in a formation of an intermediate preactivation complex which associates with DNA-bound CBF-1/RBPJ. The activated membrane-bound form interacts with AAK1 which promotes NOTCH1 stabilization. Forms a trimeric complex with FBXW7 and SGK1. Interacts with HIF1AN. HIF1AN negatively regulates the function of notch intracellular domain (NICD), accelerating myogenic differentiation. Interacts (via NICD) with SNAI1 (via zinc fingers); the interaction induces SNAI1 degradation via MDM2-mediated ubiquitination and inhibits SNAI1-induced cell invasion. Interacts (via NICD) with MDM2A. Interacts (via NICD) with BCL6; the interaction decreases MAML1 recruitment by NOTCH1 NICD on target genes DNA and inhibits NOTCH1 transactivation activity. Interacts with THBS4. Interacts (via the EGF-like repeat region) with CCN3 (via CTCK domain). Interacts (via EGF-like domains) with DLL4 (via N-terminal DSL and MNNL domains). Interacts with ZMIZ1. Interacts (via NICD domain) with MEGF10 (via the cytoplasmic domain). Interacts with DLL1 and JAG1. Interacts (via NICD domain) with PRAG1. Forms a complex with PRAG1, N1ICD and MAML1, in a MAML1-dependent manner. Interacts (via transmembrane region) with PSEN1; the interaction is direct. Interacts with ZFP64. Synthesized in the endoplasmic reticulum as an inactive form which is proteolytically cleaved by a furin-like convertase in the trans-Golgi network before it reaches the plasma membrane to yield an active, ligand-accessible form. Cleavage results in a C-terminal fragment N(TM) and a N-terminal fragment N(EC). Following ligand binding, it is cleaved by ADAM17 to yield a membrane-associated intermediate fragment called notch extracellular truncation (NEXT). Following endocytosis, this fragment is then cleaved by one of the catalytic subunits of gamma-secretase (PSEN1 or PSEN2), to release a Notch-derived peptide containing the intracellular domain (NICD) from the membrane. In terms of processing, phosphorylated. Post-translationally, O-glycosylated on the EGF-like domains. O-glucosylated at Ser-435 by KDELC1 and KDELC2. Contains both O-linked fucose and O-linked glucose in the EGF-like domains 11, 12 and 13, which are interacting with the residues on DLL4. O-linked glycosylation by GALNT11 is involved in determination of left/right symmetry: glycosylation promotes activation of NOTCH1, possibly by promoting cleavage by ADAM17, modulating the balance between motile and immotile (sensory) cilia at the left-right organiser (LRO). MFNG-, RFNG- and LFNG-mediated modification of O-fucose residues at specific EGF-like domains results in inhibition of its activation by JAG1 and enhancement of its activation by DLL1 via an increased binding to DLL1. Ubiquitinated. Undergoes 'Lys-29'-linked polyubiquitination by ITCH; promotes the lysosomal degradation of non-activated internalized NOTCH1. Deubiquitination by USP12 is required for transport of internalized non-activated receptor from late endosomes to lysosomes for degradation. Monoubiquitination at Lys-1759 is required for activation by gamma-secretase cleavage, it promotes interaction with AAK1, which stabilizes it. Deubiquitination by EIF3F is necessary for nuclear import of activated Notch. In terms of processing, hydroxylated at Asn-1955 by HIF1AN. Hydroxylated at Asn-2022 by HIF1AN. Hydroxylation reduces affinity for HI1AN and may thus indirectly modulate negative regulation of NICD. In terms of tissue distribution, in fetal tissues most abundant in spleen, brain stem and lung. Also present in most adult tissues where it is found mainly in lymphoid tissues.

It is found in the cell membrane. The protein resides in the late endosome membrane. The protein localises to the nucleus. Functions as a receptor for membrane-bound ligands Jagged-1 (JAG1), Jagged-2 (JAG2) and Delta-1 (DLL1) to regulate cell-fate determination. Upon ligand activation through the released notch intracellular domain (NICD) it forms a transcriptional activator complex with RBPJ/RBPSUH and activates genes of the enhancer of split locus. Affects the implementation of differentiation, proliferation and apoptotic programs. Involved in angiogenesis; negatively regulates endothelial cell proliferation and migration and angiogenic sprouting. Involved in the maturation of both CD4(+) and CD8(+) cells in the thymus. Important for follicular differentiation and possibly cell fate selection within the follicle. During cerebellar development, functions as a receptor for neuronal DNER and is involved in the differentiation of Bergmann glia. Represses neuronal and myogenic differentiation. May play an essential role in postimplantation development, probably in some aspect of cell specification and/or differentiation. May be involved in mesoderm development, somite formation and neurogenesis. May enhance HIF1A function by sequestering HIF1AN away from HIF1A. Required for the THBS4 function in regulating protective astrogenesis from the subventricular zone (SVZ) niche after injury. Involved in determination of left/right symmetry by modulating the balance between motile and immotile (sensory) cilia at the left-right organiser (LRO). The protein is Neurogenic locus notch homolog protein 1 (NOTCH1) of Homo sapiens (Human).